The chain runs to 397 residues: Elongation factor Tu (397 aa).

The 197-residue stretch at 10 to 206 folds into the tr-type G domain; sequence KPHVNIGTIG…AVDASIPEPE (197 aa). Residues 19 to 26 are G1; sequence GHIDHGKT. Residue 19 to 26 participates in GTP binding; it reads GHIDHGKT. Thr26 contacts Mg(2+). The interval 62–66 is G2; the sequence is GITIS. The tract at residues 83–86 is G3; that stretch reads DCPG. GTP is bound by residues 83–87 and 138–141; these read DCPGH and NKAD. The interval 138–141 is G4; sequence NKAD. Residues 176-178 are G5; the sequence is SAL.

This sequence belongs to the TRAFAC class translation factor GTPase superfamily. Classic translation factor GTPase family. EF-Tu/EF-1A subfamily. As to quaternary structure, monomer.

It is found in the cytoplasm. The enzyme catalyses GTP + H2O = GDP + phosphate + H(+). GTP hydrolase that promotes the GTP-dependent binding of aminoacyl-tRNA to the A-site of ribosomes during protein biosynthesis. In Parafrankia sp. (strain EAN1pec), this protein is Elongation factor Tu.